The following is a 186-amino-acid chain: Fucolectin-6 (186 aa).

A signal peptide spans 1-32; it reads MKTCNLTDRMKVKMIMLLFQILAISTLQSVSA. The interval 40–186 is F5/8 type C-like; that stretch reads QENVAVRGKA…VEVNAMLPAN (147 aa). Ca(2+)-binding residues include Asn-67, Asp-70, Asn-72, and Ser-81. Disulfide bonds link Cys-82-Cys-175, Cys-114-Cys-115, and Cys-137-Cys-153. Alpha-L-fucose-binding residues include His-84 and Arg-111. A Cell attachment site motif is present at residues 111–113; the sequence is RGD. An alpha-L-fucose-binding site is contributed by Arg-118. Ca(2+) is bound by residues Cys-175 and Glu-176.

This sequence belongs to the fucolectin family. Homotrimer. In terms of tissue distribution, gill mucous cells.

Its subcellular location is the secreted. Acts as a defensive agent. Recognizes blood group fucosylated oligosaccharides including A, B, H and Lewis B-type antigens. Does not recognize Lewis A antigen and has low affinity for monovalent haptens. The protein is Fucolectin-6 of Anguilla japonica (Japanese eel).